Consider the following 195-residue polypeptide: Peptidyl-tRNA hydrolase (195 aa).

Tyr-17 contributes to the tRNA binding site. His-22 functions as the Proton acceptor in the catalytic mechanism. TRNA is bound by residues Tyr-68, Asn-70, and Asn-116.

This sequence belongs to the PTH family. As to quaternary structure, monomer.

It localises to the cytoplasm. The enzyme catalyses an N-acyl-L-alpha-aminoacyl-tRNA + H2O = an N-acyl-L-amino acid + a tRNA + H(+). Hydrolyzes ribosome-free peptidyl-tRNAs (with 1 or more amino acids incorporated), which drop off the ribosome during protein synthesis, or as a result of ribosome stalling. In terms of biological role, catalyzes the release of premature peptidyl moieties from peptidyl-tRNA molecules trapped in stalled 50S ribosomal subunits, and thus maintains levels of free tRNAs and 50S ribosomes. The polypeptide is Peptidyl-tRNA hydrolase (Shewanella oneidensis (strain ATCC 700550 / JCM 31522 / CIP 106686 / LMG 19005 / NCIMB 14063 / MR-1)).